A 756-amino-acid polypeptide reads, in one-letter code: MSPQKRVKNVQAQNRTSQGSSSFQTTLSAWKVKQDPSNSKNISKHGQNNPVGDYEHADDQAEEDALQMAVGYFEKGPIKASQNKDKTLEKHLKTVENVAWKNGLASEEIDILLNIALSGKFGNAVNTRILKCMIPATVISEDSVVKAVSWLCVGKCSGSTKVLFYRWLVAMFDFIDRKEQINLLYGFFFASLQDDALCPYVCHLLYLLTKKENVKPFRVRKLLDLQAKMGMQPHLQALLSLYKFFAPALISVSLPVRKKIYFKNSENLWKTALLAVKQRNRGPSPEPLKLMLGPANVRPLKRKWNSLSVIPVLNSSSYTKECGKKEMSLSDCLNRSGSFPLEQLQSFPQLLQNIHCLELPSQMGSVLNNSLLLHYINCVRDEPVLLRFYYWLSQTLQEECIWYKVNNYEHGKEFTNFLDTIIRAECFLQEGFYSCEAFLYKSLPLWDGLCCRSQFLQLVSWIPFSSFSEVKPLLFDHLAQLFFTSTIYFKCSVLQSLKELLQNWLLWLSMDIHMKPVTNSPLETTLGGSMNSVSKLIHYVGWLSTTAMRLESNNTFLLHFILDFYEKVCDIYINYNLPLVVLFPPGIFYSALLSLDTSILNQLCFIMHRYRKNLTAAKKNELVQKTKSEFNFSSKTYQEFNHYLTSMVGCLWTSKPFGKGIYIDPEILEKTGVAEYKNSLNVVHHPSFLSYAVSFLLQESPEERTVNVSSIRGKKWSWYLDYLFSQGLQGLKLFIRSSVHHSSIPRAEGINCNNQY.

A disordered region spans residues 1–60; the sequence is MSPQKRVKNVQAQNRTSQGSSSFQTTLSAWKVKQDPSNSKNISKHGQNNPVGDYEHADDQ. Polar residues-rich tracts occupy residues 10-28 and 35-50; these read VQAQ…TTLS and DPSN…QNNP.

The protein belongs to the CENP-I/CTF3 family. In terms of assembly, component of the CENPA-CAD complex, composed of CENPI, CENPK, CENPL, CENPO, CENPP, CENPQ, CENPR and CENPS. The CENPA-CAD complex interacts with the CENPA-NAC complex, at least composed of CENPA, CENPC, CENPH, CENPM, CENPN, CENPT and CENPU. Interacts with SENP6. Sumoylated. Sumoylated form can be polyubiquitinated by RNF4, leading to its degradation. Desumoylation by SENP6 prevents its degradation.

The protein localises to the nucleus. It localises to the chromosome. It is found in the centromere. Its function is as follows. Component of the CENPA-CAD (nucleosome distal) complex, a complex recruited to centromeres which is involved in assembly of kinetochore proteins, mitotic progression and chromosome segregation. May be involved in incorporation of newly synthesized CENPA into centromeres via its interaction with the CENPA-NAC complex. Required for the localization of CENPF, MAD1L1 and MAD2 (MAD2L1 or MAD2L2) to kinetochores. Involved in the response of gonadal tissues to follicle-stimulating hormone. The polypeptide is Centromere protein I (CENPI) (Homo sapiens (Human)).